We begin with the raw amino-acid sequence, 360 residues long: Peptide chain release factor 1 (360 aa).

An N5-methylglutamine modification is found at Gln235. Positions 284 to 293 are enriched in basic and acidic residues; that stretch reads QKRQQEEAST. A disordered region spans residues 284-305; it reads QKRQQEEASTRRNLLGSGDRSD.

The protein belongs to the prokaryotic/mitochondrial release factor family. In terms of processing, methylated by PrmC. Methylation increases the termination efficiency of RF1.

It localises to the cytoplasm. Peptide chain release factor 1 directs the termination of translation in response to the peptide chain termination codons UAG and UAA. In Pectobacterium carotovorum subsp. carotovorum (strain PC1), this protein is Peptide chain release factor 1.